The following is a 232-amino-acid chain: Ion-translocating oxidoreductase complex subunit E (232 aa).

6 helical membrane passes run 18-38 (ALVQ…VTNG), 39-59 (LGLG…VSII), 69-89 (IPIF…LMNA), 93-113 (ELYQ…AIIG), 128-148 (AFDG…LGAM), and 182-202 (PFLL…LIAA).

The protein belongs to the NqrDE/RnfAE family. As to quaternary structure, the complex is composed of six subunits: RnfA, RnfB, RnfC, RnfD, RnfE and RnfG.

The protein localises to the cell inner membrane. Functionally, part of a membrane-bound complex that couples electron transfer with translocation of ions across the membrane. The sequence is that of Ion-translocating oxidoreductase complex subunit E from Pseudoalteromonas atlantica (strain T6c / ATCC BAA-1087).